The following is a 368-amino-acid chain: Meiotic driver wtf23 (368 aa).

The segment at 1–98 (MKNKYYPLRS…SSGTADNSST (98 aa)) is disordered. Positions 11–29 (SMDELSAKNDNEIDLEKGP) are enriched in basic and acidic residues. Polar residues-rich tracts occupy residues 57–72 (GANN…STTP) and 89–98 (SSGTADNSST). Transmembrane regions (helical) follow at residues 105–124 (FLSF…YLTY), 139–158 (YFGV…WYFY), 170–192 (IFLA…VISI), 202–221 (MIII…GCVK), 234–256 (STCT…FWTF), 266–283 (VFLL…TMFL), and 328–350 (GIAF…FRGG).

This sequence belongs to the WTF family. As to quaternary structure, homomer. Forms protein aggregates. The two isoforms can interact with each other and with themselves. High sequence similarity is required for their interaction.

The protein localises to the spore membrane. It localises to the vacuole membrane. The protein resides in the ascus epiplasm. Its subcellular location is the cytoplasm. It is found in the endoplasmic reticulum membrane. Its function is as follows. Promotes unequal transmission of alleles from the parental zygote to progeny spores by acting as poison/antidote system where the poison and antidote proteins are produced from the same locus; the poison component is trans-acting and targets all spores within an ascus whereas the antidote component is spore-specific, leading to poisoning of all progeny that do not inherit the allele. Functionally, localizes isoform 2 to the vacuole thereby facilitating its degradation. In terms of biological role, forms toxic aggregates that disrupt spore maturation. The chain is Meiotic driver wtf23 from Schizosaccharomyces pombe (strain 972 / ATCC 24843) (Fission yeast).